Here is a 105-residue protein sequence, read N- to C-terminus: ATP synthase subunit c (105 aa).

Transmembrane regions (helical) follow at residues 3-23, 32-52, and 78-98; these read FLALFFLALVGVAFAYDGGMD, SILGAMIGLGIAAFGGAIGMG, and VAMAMIEAQVIYTLVFAIIAI.

It belongs to the ATPase C chain family. As to quaternary structure, F-type ATPases have 2 components, F(1) - the catalytic core - and F(0) - the membrane proton channel. F(1) has five subunits: alpha(3), beta(3), gamma(1), delta(1), epsilon(1). F(0) has three main subunits: a(1), b(2) and c(10-14). The alpha and beta chains form an alternating ring which encloses part of the gamma chain. F(1) is attached to F(0) by a central stalk formed by the gamma and epsilon chains, while a peripheral stalk is formed by the delta and b chains.

The protein resides in the cell inner membrane. Its function is as follows. F(1)F(0) ATP synthase produces ATP from ADP in the presence of a proton or sodium gradient. F-type ATPases consist of two structural domains, F(1) containing the extramembraneous catalytic core and F(0) containing the membrane proton channel, linked together by a central stalk and a peripheral stalk. During catalysis, ATP synthesis in the catalytic domain of F(1) is coupled via a rotary mechanism of the central stalk subunits to proton translocation. In terms of biological role, key component of the F(0) channel; it plays a direct role in translocation across the membrane. A homomeric c-ring of between 10-14 subunits forms the central stalk rotor element with the F(1) delta and epsilon subunits. This Helicobacter acinonychis (strain Sheeba) protein is ATP synthase subunit c.